Consider the following 202-residue polypeptide: Holliday junction branch migration complex subunit RuvA (202 aa).

Residues 1–65 are domain I; that stretch reads MIAYVEGRLA…EDALELYGFA (65 aa). The tract at residues 66–144 is domain II; it reads TWDERQTFIV…VEDLPAAAPL (79 aa). The segment at 145–155 is flexible linker; sequence VTGGAPGGVFR. Residues 155–202 are domain III; sequence RDALAGLANLGYGEEEASHVLKDVLHGEPDLDVGGALRAALRALARGR.

It belongs to the RuvA family. Homotetramer. Forms an RuvA(8)-RuvB(12)-Holliday junction (HJ) complex. HJ DNA is sandwiched between 2 RuvA tetramers; dsDNA enters through RuvA and exits via RuvB. An RuvB hexamer assembles on each DNA strand where it exits the tetramer. Each RuvB hexamer is contacted by two RuvA subunits (via domain III) on 2 adjacent RuvB subunits; this complex drives branch migration. In the full resolvosome a probable DNA-RuvA(4)-RuvB(12)-RuvC(2) complex forms which resolves the HJ.

Its subcellular location is the cytoplasm. In terms of biological role, the RuvA-RuvB-RuvC complex processes Holliday junction (HJ) DNA during genetic recombination and DNA repair, while the RuvA-RuvB complex plays an important role in the rescue of blocked DNA replication forks via replication fork reversal (RFR). RuvA specifically binds to HJ cruciform DNA, conferring on it an open structure. The RuvB hexamer acts as an ATP-dependent pump, pulling dsDNA into and through the RuvAB complex. HJ branch migration allows RuvC to scan DNA until it finds its consensus sequence, where it cleaves and resolves the cruciform DNA. This Nitratidesulfovibrio vulgaris (strain ATCC 29579 / DSM 644 / CCUG 34227 / NCIMB 8303 / VKM B-1760 / Hildenborough) (Desulfovibrio vulgaris) protein is Holliday junction branch migration complex subunit RuvA.